Here is a 158-residue protein sequence, read N- to C-terminus: Transcription antitermination protein NusB (158 aa).

It belongs to the NusB family.

In terms of biological role, involved in transcription antitermination. Required for transcription of ribosomal RNA (rRNA) genes. Binds specifically to the boxA antiterminator sequence of the ribosomal RNA (rrn) operons. The polypeptide is Transcription antitermination protein NusB (Bartonella henselae (strain ATCC 49882 / DSM 28221 / CCUG 30454 / Houston 1) (Rochalimaea henselae)).